A 129-amino-acid chain; its full sequence is DNA base-flipping protein (129 aa).

Belongs to the MGMT family. ATL subfamily. As to quaternary structure, interacts with HelD and UvrA.

Involved in DNA damage recognition. Binds DNA containing O(6)-methylguanine and larger O(6)-alkylguanine adducts, and to double-stranded DNA that contains an AP (apurinic/apyrimidinic) site. Binds to the damaged base and flips the base out of the DNA duplex into an extrahelical conformation, which allows processing by repair proteins. Works in partnership with the nucleotide excision repair (NER) pathway to enhance the repair of the O(6)-alkylguanine adducts larger than the methyl adduct. Also prevents methyl-directed mismatch repair (MMR)-mediated attack of the O(6)-alkylguanine:T mispairs for the larger alkyl groups. The chain is DNA base-flipping protein from Escherichia coli (strain K12).